A 7481-amino-acid chain; its full sequence is Polyketide synthase GfsA (7481 aa).

A loading module (LM) region spans residues 24–1020 (ASDEPIAVIG…ETAEFVRARL (997 aa)). The Ketosynthase family 3 (KS3) 1 domain occupies 26 to 451 (DEPIAVIGLS…GTNCHVVVSA (426 aa)). Residues 60-80 (RVPADRETPPSTEEESADGEA) are disordered. The active-site For decarboxylation activity of LM is glutamine 197. The active-site For acyltransferase activity of LM is the serine 662. A Carrier 1 domain is found at 945 to 1020 (PDPVETVRQL…ETAEFVRARL (76 aa)). Serine 980 carries the post-translational modification O-(pantetheine 4'-phosphoryl)serine. The Ketosynthase family 3 (KS3) 2 domain occupies 1038 to 1454 (DEPIAVVAMS…GTNAHVILEQ (417 aa)). Module stretches follow at residues 1038-2517 (DEPI…AGEL), 2538-4063 (EDPI…LQRI), 4084-5636 (DDPI…GSEV), and 5655-7400 (DEPV…GEQL). Residues cysteine 1201, histidine 1336, and histidine 1376 each act as for beta-ketoacyl synthase 1 activity in the active site. Residues 2442–2517 (RVLLDLVRGR…ALAEHLAGEL (76 aa)) enclose the Carrier 2 domain. Serine 2477 is subject to O-(pantetheine 4'-phosphoryl)serine. Positions 2538 to 2964 (EDPIAIVAMS…GTNAHVIIEE (427 aa)) constitute a Ketosynthase family 3 (KS3) 3 domain. Residues cysteine 2711, histidine 2846, and histidine 2886 each act as for beta-ketoacyl synthase 2 activity in the active site. The Carrier 3 domain maps to 3988–4063 (QALQDLVLTE…ATTEYLLQRI (76 aa)). Residue serine 4023 is modified to O-(pantetheine 4'-phosphoryl)serine. The Ketosynthase family 3 (KS3) 4 domain maps to 4084–4514 (DDPIAIVAMG…GTNAHVILEQ (431 aa)). Residues cysteine 4261, histidine 4396, and histidine 4436 each act as for beta-ketoacyl synthase 3 activity in the active site. The region spanning 5561–5636 (TALLDLIRGQ…ALAEYVGSEV (76 aa)) is the Carrier 4 domain. The residue at position 5596 (serine 5596) is an O-(pantetheine 4'-phosphoryl)serine. A Ketosynthase family 3 (KS3) 5 domain is found at 5655–6081 (DEPVAIIGMS…GTNAHVILEQ (427 aa)). Active-site for beta-ketoacyl synthase 4 activity residues include cysteine 5828, histidine 5963, and histidine 6003. An N-terminal hotdog fold region spans residues 6561 to 6685 (HPLLGAAVAL…GVLASGAATV (125 aa)). The PKS/mFAS DH domain occupies 6561 to 6841 (HPLLGAAVAL…LRPVSADTIA (281 aa)). Histidine 6593 serves as the catalytic Proton acceptor; for dehydratase activity. The tract at residues 6700–6841 (ATAVDIDGLY…LRPVSADTIA (142 aa)) is C-terminal hotdog fold. Residue aspartate 6761 is the Proton donor; for dehydratase activity of the active site. The Carrier 5 domain maps to 7325 to 7400 (QELLDFVCEH…LLAGHIGEQL (76 aa)). An O-(pantetheine 4'-phosphoryl)serine modification is found at serine 7360.

Homodimer. The loading module (LM, residues 13-926) dimerizes. LM cross-links to its cognate acyl-carrier domain in a manner that seems physiological; mutation of residues in the 2 domains alters reactions efficiency in a manner predicted by the cross-linked crystal. It depends on pantetheine 4'-phosphate as a cofactor.

It functions in the pathway antibiotic biosynthesis. Functionally, first protein in the synthesis of the 16-membered macrolide antibiotics FD-891 and FD-892. Composed of 5 modules; the first is a loading module (LM) that synthesizes a starter unit used by the first elongation module for polyketide chain elongation. The starter unit is extended by multiple rounds of addition of malonyl-CoA or methylmalonyl-CoA, and other modifications to help generate the final products. The loading module (residues 1-927, LM with an inactive acyltransferase domain) preferentially decarboxylates malonyl-GfsA acyl carrier protein of the LM (ACP-LM) over methylmalonyl-GfsA ACP-LM and has no activity on malonyl-CoA or methymalonyl-CoA. LM decarboxylates malonyl-ACP-LM better than the malonyl-ACP-1 module of GfsA (i.e. the next module in the same protein) and has no activity on other malonyl-ACP modules. The protein is Polyketide synthase GfsA of Streptomyces halstedii.